The following is a 392-amino-acid chain: tRNA (guanine-N(7)-)-methyltransferase (392 aa).

Residues glutamate 123, glutamate 148, and aspartate 175 each coordinate S-adenosyl-L-methionine. Substrate is bound by residues lysine 201 and aspartate 231.

Belongs to the class I-like SAM-binding methyltransferase superfamily. TrmB family.

The catalysed reaction is guanosine(46) in tRNA + S-adenosyl-L-methionine = N(7)-methylguanosine(46) in tRNA + S-adenosyl-L-homocysteine. It functions in the pathway tRNA modification; N(7)-methylguanine-tRNA biosynthesis. Functionally, catalyzes the formation of N(7)-methylguanine at position 46 (m7G46) in tRNA. The chain is tRNA (guanine-N(7)-)-methyltransferase from Campylobacter jejuni subsp. doylei (strain ATCC BAA-1458 / RM4099 / 269.97).